Consider the following 222-residue polypeptide: Peroxisomal membrane protein 11-4 (222 aa).

Topologically, residues 1–81 are cytoplasmic; sequence MSAGDTLDKL…LNGLRRAPGE (81 aa). The chain crosses the membrane as a helical span at residues 82–102; sequence FGALAVLANAGEMVYFFFDHF. The Lumenal segment spans residues 103-196; it reads TWLSRVGVLD…IGIADIEPNP (94 aa). Residues 197-217 traverse the membrane as a helical segment; that stretch reads FCNHAVTLGISGLVSAWAGWY. Residues 218-222 are Cytoplasmic-facing; it reads RNWPS.

Belongs to the peroxin-11 family. As to expression, expressed in seedlings, shoots, leaf sheaths and flag leaf.

It is found in the peroxisome membrane. Its function is as follows. Involved in peroxisomal proliferation. The polypeptide is Peroxisomal membrane protein 11-4 (PEX11-4) (Oryza sativa subsp. indica (Rice)).